Here is an 825-residue protein sequence, read N- to C-terminus: Fibrous sheath CABYR-binding protein (825 aa).

2 disordered regions span residues 1 to 43 and 113 to 139; these read MVGK…SYSA and QDVEIPPNIPSVQLKMDRSQQTSRTGY. Over residues 21 to 40 the composition is skewed to polar residues; it reads KSSSPKATHRIGNTSGSKGS. Serine 160 bears the Phosphoserine mark. Disordered regions lie at residues 168–232, 244–718, and 732–751; these read SRPD…LLED, QEGS…DKHS, and GEASAEVSPPPSEQTPEDEA. The span at 200-220 shows a compositional bias: polar residues; it reads PATNSNEEIGQKNISRTSFTQ. The span at 277–290 shows a compositional bias: basic and acidic residues; the sequence is ATAKAEPRPAEETH. Low complexity-rich tracts occupy residues 348–357 and 398–407; these read AEILPPSAEE and PLPAEGALEE. The segment covering 610–676 has biased composition (pro residues); the sequence is VQPPPAEEAP…PAEVQPPPAE (67 aa).

Interacts with CABYR. Interacts with ROPN1 and ROPN1L; the interaction increases upon spermatozoa capacitation conditions. Post-translationally, phosphorylated by PKA upon spermatozoa capacitation conditions.

It localises to the cell projection. The protein localises to the cilium. The protein resides in the flagellum. In terms of biological role, may be involved in the later stages of fibrous sheath biogenesis and spermatozoa capacitation. Inhibits ROPN1 and ROPN1L SUMOylation. Binds calcium. The sequence is that of Fibrous sheath CABYR-binding protein (FSCB) from Homo sapiens (Human).